A 358-amino-acid chain; its full sequence is Alternative oxidase, mitochondrial (358 aa).

The helical transmembrane segment at L152 to L172 threads the bilayer. 3 residues coordinate Fe cation: E159, E198, and H201. A helical transmembrane segment spans residues F217–S237. Positions 249, 250, 306, and 309 each coordinate Fe cation.

Belongs to the alternative oxidase family. Fe cation is required as a cofactor.

The protein resides in the mitochondrion inner membrane. Functionally, catalyzes cyanide-resistant oxygen consumption. May increase respiration when the cytochrome respiratory pathway is restricted, or in response to low temperatures. The protein is Alternative oxidase, mitochondrial of Blumeria graminis (Powdery mildew).